A 290-amino-acid chain; its full sequence is 4-hydroxybenzoate octaprenyltransferase (290 aa).

The next 6 membrane-spanning stretches (helical) occupy residues 33–53, 99–119, 141–161, 213–233, 234–254, and 268–288; these read LWAL…AVFV, LFVI…VKTI, LPQV…FCAV, LIIG…GWLN, GLGA…IWQQ, and AFLN…LSYL.

The protein belongs to the UbiA prenyltransferase family. Mg(2+) is required as a cofactor.

Its subcellular location is the cell inner membrane. It catalyses the reaction all-trans-octaprenyl diphosphate + 4-hydroxybenzoate = 4-hydroxy-3-(all-trans-octaprenyl)benzoate + diphosphate. Its pathway is cofactor biosynthesis; ubiquinone biosynthesis. Catalyzes the prenylation of para-hydroxybenzoate (PHB) with an all-trans polyprenyl group. Mediates the second step in the final reaction sequence of ubiquinone-8 (UQ-8) biosynthesis, which is the condensation of the polyisoprenoid side chain with PHB, generating the first membrane-bound Q intermediate 3-octaprenyl-4-hydroxybenzoate. This is 4-hydroxybenzoate octaprenyltransferase from Cronobacter sakazakii (strain ATCC BAA-894) (Enterobacter sakazakii).